A 164-amino-acid polypeptide reads, in one-letter code: V-type proton ATPase subunit c' (164 aa).

The Lumenal portion of the chain corresponds to 1–16; sequence MDMVASDNVYAPLYAP. A helical transmembrane segment spans residues 17 to 37; the sequence is FFGFAGCALAMILSCLGAAIG. Over 38 to 59 the chain is Cytoplasmic; that stretch reads TAKSGIGIAGIGTFKPELIMKS. The helical transmembrane segment at 60 to 80 threads the bilayer; sequence LIPVVMSGILAIYGLVVAVLI. Topologically, residues 81–98 are lumenal; sequence AGNLSPTEEYTLFNGFMH. A helical membrane pass occupies residues 99–119; it reads LSCGLCVGFACLSSGYAIGIV. Residues 120-136 lie on the Cytoplasmic side of the membrane; sequence GDVGVRKYMHQPRLFVG. A helical transmembrane segment spans residues 137 to 157; sequence IVLILIFSEVLGLYGMIIALI. Residues 158–164 are Lumenal-facing; it reads LNTKGSE.

The protein belongs to the V-ATPase proteolipid subunit family. As to quaternary structure, V-ATPase is a heteromultimeric enzyme composed of a peripheral catalytic V1 complex (components A to H) attached to an integral membrane V0 proton pore complex (components: a, c, c', c'', d, e, f and VOA1). The decameric c-ring forms the proton-conducting pore, and is composed of eight proteolipid subunits c, one subunit c' and one subunit c''.

It localises to the vacuole membrane. Its function is as follows. Proton-conducting pore forming subunit of the V0 complex of vacuolar(H+)-ATPase (V-ATPase), a multisubunit enzyme composed of a peripheral complex (V1) that hydrolyzes ATP and a membrane integral complex (V0) that translocates protons. V-ATPase is responsible for acidifying and maintaining the pH of intracellular compartments. This chain is V-type proton ATPase subunit c' (VMA11), found in Candida glabrata (strain ATCC 2001 / BCRC 20586 / JCM 3761 / NBRC 0622 / NRRL Y-65 / CBS 138) (Yeast).